Consider the following 190-residue polypeptide: Elongation factor P (190 aa).

This sequence belongs to the elongation factor P family.

Its subcellular location is the cytoplasm. It participates in protein biosynthesis; polypeptide chain elongation. Involved in peptide bond synthesis. Stimulates efficient translation and peptide-bond synthesis on native or reconstituted 70S ribosomes in vitro. Probably functions indirectly by altering the affinity of the ribosome for aminoacyl-tRNA, thus increasing their reactivity as acceptors for peptidyl transferase. This Hyphomonas neptunium (strain ATCC 15444) protein is Elongation factor P.